The sequence spans 431 residues: Serine/threonine-protein kinase Sgk1 (431 aa).

Positions 58-93 (LNLTPPQDPELMNSNPSPPPSPSQQINLGPSSNPSA) are disordered. A compositionally biased stretch (polar residues) spans 81-93 (QQINLGPSSNPSA). The region spanning 98–355 (FHFLKVIGKG…FTEIKNHVFF (258 aa)) is the Protein kinase domain. Residues 104-112 (IGKGSFGKV) and Lys127 contribute to the ATP site. The active-site Proton acceptor is the Asp222. The 76-residue stretch at 356 to 431 (SPINWDDLNA…SYAPSMDSYL (76 aa)) folds into the AGC-kinase C-terminal domain.

This sequence belongs to the protein kinase superfamily. AGC Ser/Thr protein kinase family.

It localises to the cytoplasm. Its subcellular location is the nucleus. It is found in the endoplasmic reticulum. The catalysed reaction is L-seryl-[protein] + ATP = O-phospho-L-seryl-[protein] + ADP + H(+). It catalyses the reaction L-threonyl-[protein] + ATP = O-phospho-L-threonyl-[protein] + ADP + H(+). Protein kinase that may play an important role in cellular stress response. May be involved in the regulation of processes such as cell survival, neuronal excitability and renal sodium excretion. The sequence is that of Serine/threonine-protein kinase Sgk1 (sgk1) from Fundulus heteroclitus (Killifish).